Here is a 178-residue protein sequence, read N- to C-terminus: Peptide deformylase (178 aa).

Positions 92 and 134 each coordinate Fe cation. E135 is an active-site residue. Residue H138 participates in Fe cation binding.

The protein belongs to the polypeptide deformylase family. Fe(2+) serves as cofactor.

The enzyme catalyses N-terminal N-formyl-L-methionyl-[peptide] + H2O = N-terminal L-methionyl-[peptide] + formate. In terms of biological role, removes the formyl group from the N-terminal Met of newly synthesized proteins. Requires at least a dipeptide for an efficient rate of reaction. N-terminal L-methionine is a prerequisite for activity but the enzyme has broad specificity at other positions. The polypeptide is Peptide deformylase (Alkalilimnicola ehrlichii (strain ATCC BAA-1101 / DSM 17681 / MLHE-1)).